The following is a 392-amino-acid chain: Protein SRL2 (392 aa).

Position 11 is a phosphoserine (serine 11). Positions 18-52 (KPSETPKMEEEKLEVTNVNASSSKKVHKSKKSTSK) are disordered. Positions 21 to 31 (ETPKMEEEKLE) are enriched in basic and acidic residues. Residues 41–50 (KKVHKSKKST) show a composition bias toward basic residues. Serine 139 carries the post-translational modification Phosphoserine. The interval 284–303 (EDSTAVTNENGHISSEKNLK) is disordered. Over residues 287–296 (TAVTNENGHI) the composition is skewed to polar residues.

Its subcellular location is the cytoplasm. It is found in the nucleus. The polypeptide is Protein SRL2 (SRL2) (Saccharomyces cerevisiae (strain ATCC 204508 / S288c) (Baker's yeast)).